The sequence spans 514 residues: MSSQVSYLSTRGGSSNFSFEEAVLKGLANDGGLFIPSEIPQLPSGWIEAWKDKSFPEIAFEVMSLYIPRSEISADELKKLVDRSYSTFRHPETTPLKSLKNGLNVLELFHGPTFAFKDVALQFLGNLFEFFLTRKNGNKPEDERDHLTVVGATSGDTGSAAIYGLRGKKDVSVFILFPNGRVSPIQEAQMTTVTDPNVHCITVNGVFDDCQDLVKQIFGDVEFNKKHHIGAVNSINWARILSQITYYLYSYLSVYKQGKADDVRFIVPTGNFGDILAGYYAKRMGLPTKQLVIATNENDILNRFFKTGRYEKADSTQVSPSGPISAKETYSPAMDILVSSNFERYLWYLALATEAPNHTPAEASEILSRWMNEFKRDGTVTVRPEVLEAARRDFVSERVSNDETIDAIKKIYESDHYIIDPHTAVGVETGLRCLEKTKDQDITYICLSTAHPAKFDKAVNLALSSYSDYNFNTQVLPIEFDGLLDEERTCIFSGKPNIDILKQIIEVTLSREKA.

Residue Lys-117 is modified to N6-(pyridoxal phosphate)lysine. Residues Gly-270, Asn-271, Phe-272, and Asp-274 each contribute to the pyridoxal 5'-phosphate site. Ser-319 and Ser-321 each carry phosphoserine. Residue Thr-449 participates in pyridoxal 5'-phosphate binding.

It belongs to the threonine synthase family. Pyridoxal 5'-phosphate serves as cofactor.

The catalysed reaction is O-phospho-L-homoserine + H2O = L-threonine + phosphate. It participates in amino-acid biosynthesis; L-threonine biosynthesis; L-threonine from L-aspartate: step 5/5. Its function is as follows. Catalyzes the gamma-elimination of phosphate from L-phosphohomoserine and the beta-addition of water to produce L-threonine. The chain is Threonine synthase (thrc) from Schizosaccharomyces pombe (strain 972 / ATCC 24843) (Fission yeast).